Reading from the N-terminus, the 329-residue chain is 4-hydroxythreonine-4-phosphate dehydrogenase (329 aa).

Positions 136 and 137 each coordinate substrate. Residues His166, His211, and His266 each contribute to the a divalent metal cation site. Lys274, Asn283, and Arg292 together coordinate substrate.

This sequence belongs to the PdxA family. As to quaternary structure, homodimer. The cofactor is Zn(2+). Requires Mg(2+) as cofactor. Co(2+) is required as a cofactor.

The protein localises to the cytoplasm. It catalyses the reaction 4-(phosphooxy)-L-threonine + NAD(+) = 3-amino-2-oxopropyl phosphate + CO2 + NADH. It functions in the pathway cofactor biosynthesis; pyridoxine 5'-phosphate biosynthesis; pyridoxine 5'-phosphate from D-erythrose 4-phosphate: step 4/5. Functionally, catalyzes the NAD(P)-dependent oxidation of 4-(phosphooxy)-L-threonine (HTP) into 2-amino-3-oxo-4-(phosphooxy)butyric acid which spontaneously decarboxylates to form 3-amino-2-oxopropyl phosphate (AHAP). This Citrobacter koseri (strain ATCC BAA-895 / CDC 4225-83 / SGSC4696) protein is 4-hydroxythreonine-4-phosphate dehydrogenase.